A 199-amino-acid polypeptide reads, in one-letter code: 3-isopropylmalate dehydratase small subunit (199 aa).

The protein belongs to the LeuD family. LeuD type 1 subfamily. Heterodimer of LeuC and LeuD.

The enzyme catalyses (2R,3S)-3-isopropylmalate = (2S)-2-isopropylmalate. It functions in the pathway amino-acid biosynthesis; L-leucine biosynthesis; L-leucine from 3-methyl-2-oxobutanoate: step 2/4. Catalyzes the isomerization between 2-isopropylmalate and 3-isopropylmalate, via the formation of 2-isopropylmaleate. This is 3-isopropylmalate dehydratase small subunit from Leifsonia xyli subsp. xyli (strain CTCB07).